A 409-amino-acid polypeptide reads, in one-letter code: Peptidase T (409 aa).

Residue histidine 80 coordinates Zn(2+). The active site involves aspartate 82. Residue aspartate 143 participates in Zn(2+) binding. Catalysis depends on glutamate 177, which acts as the Proton acceptor. Positions 178, 200, and 382 each coordinate Zn(2+).

This sequence belongs to the peptidase M20B family. Zn(2+) serves as cofactor.

It is found in the cytoplasm. It catalyses the reaction Release of the N-terminal residue from a tripeptide.. Functionally, cleaves the N-terminal amino acid of tripeptides. The polypeptide is Peptidase T (Enterococcus faecalis (strain ATCC 700802 / V583)).